Consider the following 432-residue polypeptide: Solute carrier family 38 member 8 (432 aa).

11 helical membrane-spanning segments follow: residues 29–49 (AVFI…PWAF), 59–79 (FLVA…LGYA), 103–123 (LCEI…LRVI), 144–164 (AAQN…LSAL), 175–195 (ILGT…YYLW), 215–237 (VFSV…SIYC), 253–273 (LSLL…FLTF), 292–312 (IIVA…IVLF), 345–365 (LPLT…LPDL), 368–388 (IISI…GLCL), and 409–429 (GILS…VAMV).

Belongs to the amino acid/polyamine transporter 2 family. As to expression, expressed in neurons located in the gray matter. Highly expressed in thalamus, hypothalamus, amygdala and pons. Expressed in the CA3 area of hippocampus and in the Purkinje layer of the cerebellum (at protein level). Expressed in the eye.

The protein resides in the membrane. The protein localises to the cytoplasm. It localises to the cell cortex. It is found in the cell projection. Its subcellular location is the axon. It carries out the reaction L-glutamine(out) = L-glutamine(in). The enzyme catalyses L-alanine(in) = L-alanine(out). The catalysed reaction is L-histidine(out) = L-histidine(in). It catalyses the reaction L-aspartate(out) = L-aspartate(in). It carries out the reaction L-arginine(in) = L-arginine(out). The enzyme catalyses L-leucine(in) = L-leucine(out). Electrogenic sodium-dependent amino acid transporter with a preference for L-glutamine, L-alanine, L-histidine, L-aspartate and L-arginine. May facilitate glutamine uptake in both excitatory and inhibitory neurons. The transport mechanism and stoichiometry remain to be elucidated. The sequence is that of Solute carrier family 38 member 8 from Mus musculus (Mouse).